A 709-amino-acid polypeptide reads, in one-letter code: RxLR effector protein PITG_15110 (709 aa).

The N-terminal stretch at 1 to 18 is a signal peptide; sequence MHAYSAAVLMGLLMVAEG. Positions 51–66 match the RxLR-dEER motif; that stretch reads RLLREPETTEASNEDR.

The protein belongs to the RxLR effector family.

It localises to the secreted. Its subcellular location is the host cytoplasm. The protein localises to the host cytoskeleton. In terms of biological role, effector that enhances P.infestans colonization of Nicotiana benthamiana leaves. The sequence is that of RxLR effector protein PITG_15110 from Phytophthora infestans (strain T30-4) (Potato late blight agent).